A 93-amino-acid polypeptide reads, in one-letter code: MGRSLKKGPFVDAKLLLKIEKMNERNEKHMIKTWSRASTILPVMIGHTIAVHNGKQHVPIYITDQMVGHKLGEFVPTRTFRGHAGSDKKAARR.

The protein belongs to the universal ribosomal protein uS19 family.

In terms of biological role, protein S19 forms a complex with S13 that binds strongly to the 16S ribosomal RNA. The polypeptide is Small ribosomal subunit protein uS19 (Synechococcus sp. (strain JA-3-3Ab) (Cyanobacteria bacterium Yellowstone A-Prime)).